The chain runs to 59 residues: Photosystem II reaction center protein K (59 aa).

The propeptide occupies 1–22 (MLNIFSLICLNSALHSSSFFFA). The chain crosses the membrane as a helical span at residues 38–58 (MPVIPVLFFLLALVWQAAVSF).

This sequence belongs to the PsbK family. In terms of assembly, PSII is composed of 1 copy each of membrane proteins PsbA, PsbB, PsbC, PsbD, PsbE, PsbF, PsbH, PsbI, PsbJ, PsbK, PsbL, PsbM, PsbT, PsbX, PsbY, PsbZ, Psb30/Ycf12, at least 3 peripheral proteins of the oxygen-evolving complex and a large number of cofactors. It forms dimeric complexes.

It localises to the plastid. The protein resides in the chloroplast thylakoid membrane. One of the components of the core complex of photosystem II (PSII). PSII is a light-driven water:plastoquinone oxidoreductase that uses light energy to abstract electrons from H(2)O, generating O(2) and a proton gradient subsequently used for ATP formation. It consists of a core antenna complex that captures photons, and an electron transfer chain that converts photonic excitation into a charge separation. This Calycanthus floridus var. glaucus (Eastern sweetshrub) protein is Photosystem II reaction center protein K.